A 348-amino-acid chain; its full sequence is Tripartite motif-containing protein 16-like protein (348 aa).

The region spanning 139 to 337 (YWTSKPEPST…RIVDLGEEPE (199 aa)) is the B30.2/SPRY domain.

It belongs to the TRIM/RBCC family.

It localises to the cytoplasm. The protein is Tripartite motif-containing protein 16-like protein (TRIM16L) of Homo sapiens (Human).